The chain runs to 295 residues: UDP-N-acetylenolpyruvoylglucosamine reductase (295 aa).

An FAD-binding PCMH-type domain is found at 26–189; that stretch reads VGGQADILFK…IEAEFKGVSS (164 aa). R169 is an active-site residue. The active-site Proton donor is the C218. E288 is a catalytic residue.

Belongs to the MurB family. It depends on FAD as a cofactor.

Its subcellular location is the cytoplasm. The catalysed reaction is UDP-N-acetyl-alpha-D-muramate + NADP(+) = UDP-N-acetyl-3-O-(1-carboxyvinyl)-alpha-D-glucosamine + NADPH + H(+). The protein operates within cell wall biogenesis; peptidoglycan biosynthesis. Cell wall formation. The sequence is that of UDP-N-acetylenolpyruvoylglucosamine reductase from Wolbachia sp. subsp. Brugia malayi (strain TRS).